The following is a 246-amino-acid chain: Large ribosomal subunit protein uL30-like 1 (246 aa).

Ser-54 carries the phosphoserine modification.

It belongs to the universal ribosomal protein uL30 family.

The chain is Large ribosomal subunit protein uL30-like 1 (RPL7L1) from Pongo abelii (Sumatran orangutan).